Consider the following 343-residue polypeptide: Biotin synthase (343 aa).

Residues asparagine 64–arginine 291 enclose the Radical SAM core domain. [4Fe-4S] cluster contacts are provided by cysteine 79, cysteine 83, and cysteine 86. Residues cysteine 123, cysteine 154, cysteine 214, and arginine 286 each contribute to the [2Fe-2S] cluster site.

It belongs to the radical SAM superfamily. Biotin synthase family. As to quaternary structure, homodimer. It depends on [4Fe-4S] cluster as a cofactor. [2Fe-2S] cluster is required as a cofactor.

It carries out the reaction (4R,5S)-dethiobiotin + (sulfur carrier)-SH + 2 reduced [2Fe-2S]-[ferredoxin] + 2 S-adenosyl-L-methionine = (sulfur carrier)-H + biotin + 2 5'-deoxyadenosine + 2 L-methionine + 2 oxidized [2Fe-2S]-[ferredoxin]. It participates in cofactor biosynthesis; biotin biosynthesis; biotin from 7,8-diaminononanoate: step 2/2. Catalyzes the conversion of dethiobiotin (DTB) to biotin by the insertion of a sulfur atom into dethiobiotin via a radical-based mechanism. The chain is Biotin synthase from Cupriavidus necator (strain ATCC 17699 / DSM 428 / KCTC 22496 / NCIMB 10442 / H16 / Stanier 337) (Ralstonia eutropha).